Here is a 208-residue protein sequence, read N- to C-terminus: Thymidylate kinase (208 aa).

7-14 provides a ligand contact to ATP; the sequence is GIDGAGKT.

Belongs to the thymidylate kinase family.

It catalyses the reaction dTMP + ATP = dTDP + ADP. In terms of biological role, phosphorylation of dTMP to form dTDP in both de novo and salvage pathways of dTTP synthesis. This is Thymidylate kinase (tmk) from Xylella fastidiosa (strain 9a5c).